The primary structure comprises 607 residues: Chaperone protein DnaK (607 aa).

At Thr174 the chain carries Phosphothreonine; by autocatalysis. The span at 577-594 shows a compositional bias: polar residues; that stretch reads QSAGSTAGNPGQGQSTEN. The tract at residues 577–607 is disordered; it reads QSAGSTAGNPGQGQSTENPGGKTIDGDYKVN.

Belongs to the heat shock protein 70 family.

Functionally, acts as a chaperone. The protein is Chaperone protein DnaK of Dictyoglomus turgidum (strain DSM 6724 / Z-1310).